A 142-amino-acid chain; its full sequence is MISKRKKKSDTKVYALGQHIRMSAHKARRVIDQIRGRSYEETLMILELMPYRACYPIFKLVYSAAANASHNMGFNETSLVVSKAEVNEGTTVKKFKPRARGRSYPIKRPTCHITIVLEDTTVYDEYVISHDTYSSGGLWDKK.

This sequence belongs to the universal ribosomal protein uL22 family. In terms of assembly, part of the 50S ribosomal subunit.

The protein localises to the plastid. Its subcellular location is the chloroplast. This protein binds specifically to 23S rRNA. Functionally, the globular domain of the protein is located near the polypeptide exit tunnel on the outside of the subunit, while an extended beta-hairpin is found that lines the wall of the exit tunnel in the center of the 70S ribosome. This is Large ribosomal subunit protein uL22c (rpl22) from Carica papaya (Papaya).